The sequence spans 71 residues: Peptide Ctri9819 (71 aa).

The N-terminal stretch at 1-23 is a signal peptide; it reads MKTVSTVAILAIFLLIVITTIET. Leu-34 carries the post-translational modification Leucine amide. Positions 38-71 are excised as a propeptide; it reads SKLETFKRIARTLSAGISAKRSLEDVNSLTGMSS.

It belongs to the non-disulfide-bridged peptide (NDBP) superfamily. Short antimicrobial peptide (group 4) family. As to expression, expressed by the venom gland.

It is found in the secreted. In terms of biological role, antimicrobial peptide. In Chaerilus tricostatus (Scorpion), this protein is Peptide Ctri9819.